A 259-amino-acid polypeptide reads, in one-letter code: NAD kinase (259 aa).

Residue Asp49 is the Proton acceptor of the active site. NAD(+) is bound by residues 49–50 (DG), Arg54, 118–119 (NE), Asp148, Ala156, 159–164 (TAYNYS), and Ala183.

It belongs to the NAD kinase family. Requires a divalent metal cation as cofactor.

Its subcellular location is the cytoplasm. It catalyses the reaction NAD(+) + ATP = ADP + NADP(+) + H(+). Its function is as follows. Involved in the regulation of the intracellular balance of NAD and NADP, and is a key enzyme in the biosynthesis of NADP. Catalyzes specifically the phosphorylation on 2'-hydroxyl of the adenosine moiety of NAD to yield NADP. This chain is NAD kinase, found in Xylella fastidiosa (strain 9a5c).